A 235-amino-acid polypeptide reads, in one-letter code: Probable transcriptional regulatory protein JJD26997_0557 (235 aa).

This sequence belongs to the TACO1 family.

The protein resides in the cytoplasm. The polypeptide is Probable transcriptional regulatory protein JJD26997_0557 (Campylobacter jejuni subsp. doylei (strain ATCC BAA-1458 / RM4099 / 269.97)).